The sequence spans 385 residues: Probable splicing factor YJU2B (385 aa).

The segment at 1–26 is disordered; the sequence is MGERKGQNKYYPPDFNPEKHGSLNRY. At Ser-40 the chain carries Phosphoserine. Residues 182–215 adopt a coiled-coil conformation; the sequence is LNSMLRRHFREKKKAMQEEEEKDQALQAKANLAI. The tract at residues 256-385 is disordered; that stretch reads FPSAQGPSTS…VADYSDSESE (130 aa). Polar residues predominate over residues 260 to 270; that stretch reads QGPSTSSSKAS. Ser-306 carries the phosphoserine modification. Composition is skewed to polar residues over residues 307–316 and 359–373; these read PQCTADNSLS and GSSQEDLLHPNTPNA.

It belongs to the CWC16 family.

It localises to the nucleus. Its function is as follows. May be involved in mRNA splicing. The chain is Probable splicing factor YJU2B from Rattus norvegicus (Rat).